The sequence spans 132 residues: Small ribosomal subunit protein uS8c (132 aa).

This sequence belongs to the universal ribosomal protein uS8 family. In terms of assembly, part of the 30S ribosomal subunit.

The protein resides in the plastid. The protein localises to the chloroplast. In terms of biological role, one of the primary rRNA binding proteins, it binds directly to 16S rRNA central domain where it helps coordinate assembly of the platform of the 30S subunit. In Spirogyra maxima (Green alga), this protein is Small ribosomal subunit protein uS8c (rps8).